A 288-amino-acid polypeptide reads, in one-letter code: Glutamate racemase (288 aa).

Residues 10–11 (DS) and 42–43 (YG) contribute to the substrate site. Cysteine 73 serves as the catalytic Proton donor/acceptor. 74 to 75 (NT) provides a ligand contact to substrate. Cysteine 184 (proton donor/acceptor) is an active-site residue. Substrate is bound at residue 185–186 (TH).

It belongs to the aspartate/glutamate racemases family.

It carries out the reaction L-glutamate = D-glutamate. It functions in the pathway cell wall biogenesis; peptidoglycan biosynthesis. Its function is as follows. Provides the (R)-glutamate required for cell wall biosynthesis. The chain is Glutamate racemase from Corynebacterium kroppenstedtii (strain DSM 44385 / JCM 11950 / CIP 105744 / CCUG 35717).